A 273-amino-acid chain; its full sequence is MTELYAVIGHPIDHSQSPFIHQEFARQTGLGLDYERLLSPLDGFEATVRQFIGRGGKGLNVTLPFKLEACQLSGALTERARAADAVNTLTFRDGQIQGDNTDGVGLVRDIVDNLDVRIQGKRLLLLGAGGAVRGVLQPLLAQHPASLTVANRTVTKAEALVTHFAQWGEVDAAGYDDLAGQQFDIVINGTSTGLSGNDLPLPAGLLAGSELVYDMVYGKGLTPFLARGQAERAGMLSDGLGMLVEQAAESWHIWHGGRPNTRPVMNSLRERLA.

Shikimate contacts are provided by residues 15 to 17 and Thr62; that span reads SQS. The Proton acceptor role is filled by Lys66. Glu78 contributes to the NADP(+) binding site. Shikimate-binding residues include Asn87 and Asp102. NADP(+) is bound by residues 127–131, 151–156, and Met215; these read GAGGA and NRTVTK. Tyr217 serves as a coordination point for shikimate. Gly239 contributes to the NADP(+) binding site.

It belongs to the shikimate dehydrogenase family. Homodimer.

The catalysed reaction is shikimate + NADP(+) = 3-dehydroshikimate + NADPH + H(+). It functions in the pathway metabolic intermediate biosynthesis; chorismate biosynthesis; chorismate from D-erythrose 4-phosphate and phosphoenolpyruvate: step 4/7. Involved in the biosynthesis of the chorismate, which leads to the biosynthesis of aromatic amino acids. Catalyzes the reversible NADPH linked reduction of 3-dehydroshikimate (DHSA) to yield shikimate (SA). This chain is Shikimate dehydrogenase (NADP(+)), found in Laribacter hongkongensis (strain HLHK9).